The sequence spans 352 residues: MDYQVSSPTYDIDYYTSEPCQKINVKQIAARLLPPLYSLVFIFGFVGNILVVLILINCKRLKSMTDIYLLNLAISDLLFLLTVPFWAHYAAAQWDFGNTMCQLLTGLYFIGFFSGIFFIILLTIDRYLAIVHAVFALKARTVTFGVVTSVITWVVAVFASLPRIIFTTSHRERLHYTCSSHFPYSQYQFWKNFHTLKIVILGLVLPLLVMVICYSGILKTLLRCRNEKKRHRAVRLIFTIMIVYFLFWAPYNIVLLLNTFQEFFGLNNCSSSNRLDQAMQVTETLGMTHCCINPIIYAFVGEKFRNYLLVFFQKHIAKRFCKCCSIFQQEAPERASSVYTRSTGEQEISVGL.

Topologically, residues Met-1–Ala-30 are extracellular. Tyr-3 is modified (sulfotyrosine). 2 O-linked (GalNAc...) serine glycosylation sites follow: Ser-6 and Ser-7. 3 positions are modified to sulfotyrosine: Tyr-10, Tyr-14, and Tyr-15. Cystine bridges form between Cys-20–Cys-269 and Cys-101–Cys-178. A helical membrane pass occupies residues Arg-31–Cys-58. The Cytoplasmic segment spans residues Lys-59–Tyr-68. A helical transmembrane segment spans residues Leu-69–Tyr-89. Residues Ala-90–Gln-102 lie on the Extracellular side of the membrane. Residues Leu-103–Ile-124 traverse the membrane as a helical segment. Residues Asp-125–Thr-141 lie on the Cytoplasmic side of the membrane. The helical transmembrane segment at Val-142 to Phe-166 threads the bilayer. The Extracellular portion of the chain corresponds to Thr-167–Ile-198. The helical transmembrane segment at Val-199 to Leu-218 threads the bilayer. The Cytoplasmic portion of the chain corresponds to Lys-219 to Arg-235. Residues Leu-236–Phe-260 traverse the membrane as a helical segment. The Extracellular segment spans residues Gln-261–Gln-277. The chain crosses the membrane as a helical span at residues Ala-278–Gly-301. Topologically, residues Glu-302–Leu-352 are cytoplasmic. 3 S-palmitoyl cysteine lipidation sites follow: Cys-321, Cys-323, and Cys-324. Phosphoserine; by BARK1 is present on residues Ser-336, Ser-337, Ser-342, and Ser-349.

It belongs to the G-protein coupled receptor 1 family. As to quaternary structure, interacts with PRAF2. Efficient ligand binding to CCL3/MIP-1alpha and CCL4/MIP-1beta requires sulfation, O-glycosylation and sialic acid modifications. Glycosylation on Ser-6 is required for efficient binding of CCL4. Interacts with GRK2. Interacts with ARRB1 and ARRB2. Interacts with CNIH4. Interacts with S100A4; this interaction stimulates T-lymphocyte chemotaxis. Post-translationally, sulfated on at least 2 of the N-terminal tyrosines. Sulfation is required for efficient binding of the chemokines, CCL3 and CCL4. In terms of processing, palmitoylation in the C-terminal is important for cell surface expression. Phosphorylation on serine residues in the C-terminal is stimulated by binding CC chemokines especially by APO-RANTES. Post-translationally, O-glycosylated, but not N-glycosylated. Ser-6 appears to be the major site even if Ser-7 may be also O-glycosylated. Also sialylated glycans present which contribute to chemokine binding. Thr-16 and Ser-17 may also be glycosylated and, if so, with small moieties such as a T-antigen.

Its subcellular location is the cell membrane. In terms of biological role, receptor for a number of inflammatory CC-chemokines including CCL3/MIP-1-alpha, CCL4/MIP-1-beta and RANTES and subsequently transduces a signal by increasing the intracellular calcium ion level. May play a role in the control of granulocytic lineage proliferation or differentiation. Participates in T-lymphocyte migration to the infection site by acting as a chemotactic receptor. The polypeptide is C-C chemokine receptor type 5 (CCR5) (Cercopithecus ascanius (Black-cheeked white-nosed monkey)).